Consider the following 173-residue polypeptide: Protein Rv3753c (173 aa).

This chain is Protein Rv3753c, found in Mycobacterium tuberculosis (strain ATCC 25618 / H37Rv).